The chain runs to 142 residues: Large ribosomal subunit protein uL11 (142 aa).

Belongs to the universal ribosomal protein uL11 family. Part of the ribosomal stalk of the 50S ribosomal subunit. Interacts with L10 and the large rRNA to form the base of the stalk. L10 forms an elongated spine to which L12 dimers bind in a sequential fashion forming a multimeric L10(L12)X complex. One or more lysine residues are methylated.

Its function is as follows. Forms part of the ribosomal stalk which helps the ribosome interact with GTP-bound translation factors. The sequence is that of Large ribosomal subunit protein uL11 from Bartonella henselae (strain ATCC 49882 / DSM 28221 / CCUG 30454 / Houston 1) (Rochalimaea henselae).